The sequence spans 136 residues: Large ribosomal subunit protein bL20 (136 aa).

The protein belongs to the bacterial ribosomal protein bL20 family.

Its function is as follows. Binds directly to 23S ribosomal RNA and is necessary for the in vitro assembly process of the 50S ribosomal subunit. It is not involved in the protein synthesizing functions of that subunit. The protein is Large ribosomal subunit protein bL20 of Tropheryma whipplei (strain Twist) (Whipple's bacillus).